A 74-amino-acid chain; its full sequence is DNA-directed RNA polymerase subunit omega (74 aa).

The protein belongs to the RNA polymerase subunit omega family. In terms of assembly, the RNAP catalytic core consists of 2 alpha, 1 beta/beta' and 1 omega subunit. When a sigma factor is associated with the core the holoenzyme is formed, which can initiate transcription.

It catalyses the reaction RNA(n) + a ribonucleoside 5'-triphosphate = RNA(n+1) + diphosphate. Its function is as follows. Promotes RNA polymerase assembly. Latches the N- and C-terminal regions of the beta' subunit thereby facilitating its interaction with the beta and alpha subunits. This is DNA-directed RNA polymerase subunit omega from Helicobacter hepaticus (strain ATCC 51449 / 3B1).